A 486-amino-acid polypeptide reads, in one-letter code: Glutamyl-tRNA(Gln) amidotransferase subunit A (486 aa).

Catalysis depends on charge relay system residues K79 and S154. The active-site Acyl-ester intermediate is the S178.

This sequence belongs to the amidase family. GatA subfamily. Heterotrimer of A, B and C subunits.

It catalyses the reaction L-glutamyl-tRNA(Gln) + L-glutamine + ATP + H2O = L-glutaminyl-tRNA(Gln) + L-glutamate + ADP + phosphate + H(+). Allows the formation of correctly charged Gln-tRNA(Gln) through the transamidation of misacylated Glu-tRNA(Gln) in organisms which lack glutaminyl-tRNA synthetase. The reaction takes place in the presence of glutamine and ATP through an activated gamma-phospho-Glu-tRNA(Gln). In Dehalococcoides mccartyi (strain ATCC BAA-2266 / KCTC 15142 / 195) (Dehalococcoides ethenogenes (strain 195)), this protein is Glutamyl-tRNA(Gln) amidotransferase subunit A.